Reading from the N-terminus, the 163-residue chain is GPI-anchored protein LLG2 (163 aa).

The first 23 residues, 1-23 (MEISPYCLLSLLPIFLLSGFSLS), serve as a signal peptide directing secretion. Residue Asn-52 is glycosylated (N-linked (GlcNAc...) asparagine). Residue Ser-135 is the site of GPI-anchor amidated serine attachment. A propeptide spans 136-163 (DSIPRASTTASLAVLSTFLVLCLLFLSS) (removed in mature form).

In terms of tissue distribution, expressed in pollen, pollen tubes, sporophytic pistil tissues, in the early stages of female gametophyte development, and in unfertilized, mature ovules.

The protein localises to the cell membrane. The polypeptide is GPI-anchored protein LLG2 (Arabidopsis thaliana (Mouse-ear cress)).